A 204-amino-acid polypeptide reads, in one-letter code: Ancillary SecYEG translocon subunit (204 aa).

The Cytoplasmic segment spans residues 1 to 23 (MAYSIEEEQEINQLKDWWKENGK). Residues 24–42 (TIIVAFILGVGGMFGWRYW) form a helical membrane-spanning segment. The Periplasmic segment spans residues 43 to 204 (QTHQAEQIAQ…QMAKMKLNNL (162 aa)).

The protein belongs to the YfgM family. As to quaternary structure, interacts with the SecYEG translocon. Forms a complex with PpiD.

The protein resides in the cell inner membrane. Functionally, may mediate protein transfer from the SecYEG translocon to the periplasmic chaperone network via its periplasmic C-terminal region. The sequence is that of Ancillary SecYEG translocon subunit from Haemophilus influenzae (strain ATCC 51907 / DSM 11121 / KW20 / Rd).